Reading from the N-terminus, the 1782-residue chain is Atrochrysone carboxylic acid synthase (1782 aa).

The N-terminal acylcarrier protein transacylase domain (SAT) stretch occupies residues 41 to 270; it reads HTYTKDRRYP…ALPVYGGLCH (230 aa). Positions 407-841 constitute a Ketosynthase family 3 (KS3) domain; the sequence is QSKIAIVGMS…GGNSTLAIEE (435 aa). Catalysis depends on for beta-ketoacyl synthase activity residues Cys580, His716, and His759. The tract at residues 946-1266 is malonyl-CoA:ACP transacylase (MAT) domain; it reads FAFTGQGSSY…LGILHCAGVP (321 aa). Residues 1331-1648 form a product template (PT) domain region; the sequence is TSTVQQIIHE…RILLNRFFSA (318 aa). Positions 1335–1468 are N-terminal hotdog fold; it reads QQIIHEQYDG…ATVYYEEASD (134 aa). The PKS/mFAS DH domain maps to 1335–1643; the sequence is QQIIHEQYDG…FRRYPRILLN (309 aa). His1367 functions as the Proton acceptor; for dehydratase activity in the catalytic mechanism. The C-terminal hotdog fold stretch occupies residues 1495-1643; the sequence is VANRFTRRMA…FRRYPRILLN (149 aa). Asp1554 serves as the catalytic Proton donor; for dehydratase activity. A disordered region spans residues 1653–1703; the sequence is ARKSTPATSAPAPAPPAGSEALQPKAAPASTPAAPASADAPTTNGVKAAAE. The segment covering 1678–1695 has biased composition (low complexity); sequence AAPASTPAAPASADAPTT. The Carrier domain maps to 1704-1781; it reads PDANSTAAKA…DLKSWLLEYY (78 aa). At Ser1741 the chain carries O-(pantetheine 4'-phosphoryl)serine.

Specifically expressed in conidia.

It carries out the reaction holo-[ACP] + 8 malonyl-CoA + 8 H(+) = atrochrysone carboxyl-[ACP] + 8 CO2 + 8 CoA + 2 H2O. The protein operates within secondary metabolite biosynthesis. Its function is as follows. Non-reducing polyketide synthase; part of the gene cluster that mediates the biosynthesis of trypacidin, a mycotoxin with antiprotozoal activity and that plays a role in the infection process. The pathway begins with the synthesis of atrochrysone thioester by the polyketide synthase (PKS) tpcC. The atrochrysone carboxyl ACP thioesterase tpcB then breaks the thioester bond and releases the atrochrysone carboxylic acid from tpcC. The decarboxylase tpcK converts atrochrysone carboxylic acid to atrochrysone which is further reduced into emodin anthrone. The next step is performed by the emodin anthrone oxygenase tpcL that catalyzes the oxidation of emodin anthrone to emodin. Emodin O-methyltransferase encoded by tpcA catalyzes methylation of the 8-hydroxy group of emodin to form questin. Ring cleavage of questin by questin oxidase tpcI leads to desmethylsulochrin via several intermediates including questin epoxide. Another methylation step catalyzed by tpcM leads to the formation of sulochrin which is further converted to monomethylsulfochrin by tpcH. Finally, the tpcJ catalyzes the conversion of monomethylsulfochrin to trypacidin. Trypacidin is toxic for human pulmonary and bronchial epithelial cells by initiating the intracellular formation of nitric oxide (NO) and hydrogen peroxide (H(2)O(2)), thus triggering host necrotic cell death. The trypacidin pathway is also able to produce endocrocin via a distinct route from the endocrocin Enc pathway. The chain is Atrochrysone carboxylic acid synthase from Aspergillus fumigatus (strain ATCC MYA-4609 / CBS 101355 / FGSC A1100 / Af293) (Neosartorya fumigata).